A 203-amino-acid chain; its full sequence is Phosphatidylethanolamine N-methyltransferase (203 aa).

It carries out the reaction a 1,2-diacyl-sn-glycero-3-phosphoethanolamine + S-adenosyl-L-methionine = a 1,2-diacyl-sn-glycero-3-phospho-N-methylethanolamine + S-adenosyl-L-homocysteine + H(+). It participates in phospholipid metabolism; phosphatidylcholine biosynthesis. This enzyme catalyzes three distinct methylation reactions for converting phosphatidylethanolamine to phosphatidylcholine. This chain is Phosphatidylethanolamine N-methyltransferase (pmtA), found in Cereibacter sphaeroides (Rhodobacter sphaeroides).